Consider the following 148-residue polypeptide: Large ribosomal subunit protein uL15 (148 aa).

Residues 1-28 (MIRRRKKVRKLRGSHTHGWGCKKKHRGG) are compositionally biased toward basic residues. Residues 1-43 (MIRRRKKVRKLRGSHTHGWGCKKKHRGGGSKGGRGMAGTGKRK) are disordered. Positions 29-38 (GSKGGRGMAG) are enriched in gly residues.

Belongs to the universal ribosomal protein uL15 family. As to quaternary structure, part of the 50S ribosomal subunit.

Binds to the 23S rRNA. The sequence is that of Large ribosomal subunit protein uL15 from Thermococcus kodakarensis (strain ATCC BAA-918 / JCM 12380 / KOD1) (Pyrococcus kodakaraensis (strain KOD1)).